Consider the following 205-residue polypeptide: Adenylyl-sulfate kinase (205 aa).

ATP is bound at residue 31-38; that stretch reads GLSGAGKS. The active-site Phosphoserine intermediate is Ser-105.

The protein belongs to the APS kinase family.

The catalysed reaction is adenosine 5'-phosphosulfate + ATP = 3'-phosphoadenylyl sulfate + ADP + H(+). It participates in sulfur metabolism; hydrogen sulfide biosynthesis; sulfite from sulfate: step 2/3. Catalyzes the synthesis of activated sulfate. The polypeptide is Adenylyl-sulfate kinase (Shewanella denitrificans (strain OS217 / ATCC BAA-1090 / DSM 15013)).